The sequence spans 187 residues: Ribosome-recycling factor (187 aa).

Belongs to the RRF family.

The protein resides in the cytoplasm. Responsible for the release of ribosomes from messenger RNA at the termination of protein biosynthesis. May increase the efficiency of translation by recycling ribosomes from one round of translation to another. This chain is Ribosome-recycling factor, found in Methylobacterium radiotolerans (strain ATCC 27329 / DSM 1819 / JCM 2831 / NBRC 15690 / NCIMB 10815 / 0-1).